The sequence spans 89 residues: Acylphosphatase (89 aa).

Positions 4–89 (SYIAHISGRV…WQEHHFFSIG (86 aa)) constitute an Acylphosphatase-like domain. Catalysis depends on residues R19 and N37.

Belongs to the acylphosphatase family.

It catalyses the reaction an acyl phosphate + H2O = a carboxylate + phosphate + H(+). This chain is Acylphosphatase (acyP), found in Colwellia psychrerythraea (strain 34H / ATCC BAA-681) (Vibrio psychroerythus).